Reading from the N-terminus, the 250-residue chain is 26S proteasome non-ATPase regulatory subunit 8 (250 aa).

The PCI domain maps to 63-233 (HDFETFDDYI…QEKPVNLDTV (171 aa)).

Belongs to the proteasome subunit S14 family.

In terms of biological role, acts as a regulatory subunit of the 26S proteasome which is involved in the ATP-dependent degradation of ubiquitinated proteins. The protein is 26S proteasome non-ATPase regulatory subunit 8 of Caenorhabditis elegans.